Consider the following 255-residue polypeptide: MAPRRTRKVSQDSDGQADDQHSFEQKIRLTKRKELFIQQFEKEAQDRINEMEANLNKLLATVDRVFKIELMKMPLSLHTTLIKDLMNDDDTSVGEVTMALKCASPEIQKPLSRKPSKKALNALAGQQRSSSQSKTPIEGQKKPTKKTLHSSKSTGSLRCASTINAKRTQGRVVKLSDQANALGVQFRQTSRSVGDELMMATATIVTSHGETLFLSEDNKDEINVELLDDAAVNQMRKIKELMDYLCNKVRINNTC.

2 disordered regions span residues 1–24 (MAPRRTRKVSQDSDGQADDQHSFE) and 107–156 (IQKP…STGS). A compositionally biased stretch (polar residues) spans 124–135 (AGQQRSSSQSKT).

Belongs to the borealin family. In terms of assembly, component of the CPC complex.

It is found in the nucleus. Its subcellular location is the chromosome. The protein localises to the centromere. Its function is as follows. Component of the chromosomal passenger complex (CPC), a complex that acts as a key regulator of mitosis. The CPC complex has essential functions at the centromere in ensuring correct chromosome alignment and segregation and is required for chromatin-induced microtubule stabilization and spindle assembly. This Danio rerio (Zebrafish) protein is Borealin-2 (cdca9).